A 200-amino-acid polypeptide reads, in one-letter code: 2,3-bisphosphoglycerate-dependent phosphoglycerate mutase (200 aa).

Catalysis depends on histidine 9, which acts as the Tele-phosphohistidine intermediate. The active site involves histidine 142.

Belongs to the phosphoglycerate mutase family. Homodimer.

It catalyses the reaction (2R)-2-phosphoglycerate = (2R)-3-phosphoglycerate. It functions in the pathway carbohydrate degradation; glycolysis; pyruvate from D-glyceraldehyde 3-phosphate: step 3/5. Functionally, catalyzes the interconversion of 2-phosphoglycerate and 3-phosphoglycerate. The polypeptide is 2,3-bisphosphoglycerate-dependent phosphoglycerate mutase (Thermoplasma acidophilum (strain ATCC 25905 / DSM 1728 / JCM 9062 / NBRC 15155 / AMRC-C165)).